Here is a 480-residue protein sequence, read N- to C-terminus: Cysteine--tRNA ligase (480 aa).

Residue Cys27 coordinates Zn(2+). The short motif at Pro29–Asn39 is the 'HIGH' region element. Residues Cys221, His246, and Glu250 each contribute to the Zn(2+) site. Residues Lys278 to Ser282 carry the 'KMSKS' region motif. Lys281 is an ATP binding site.

This sequence belongs to the class-I aminoacyl-tRNA synthetase family. As to quaternary structure, monomer. Zn(2+) serves as cofactor.

It is found in the cytoplasm. It carries out the reaction tRNA(Cys) + L-cysteine + ATP = L-cysteinyl-tRNA(Cys) + AMP + diphosphate. This is Cysteine--tRNA ligase from Borreliella afzelii (strain PKo) (Borrelia afzelii).